Here is a 428-residue protein sequence, read N- to C-terminus: Peptidase B (428 aa).

Mn(2+) is bound by residues K195 and D200. K207 is an active-site residue. D218, D277, and E279 together coordinate Mn(2+). Residue R281 is part of the active site.

It belongs to the peptidase M17 family. As to quaternary structure, homohexamer. Mn(2+) is required as a cofactor.

It is found in the cytoplasm. It catalyses the reaction Release of an N-terminal amino acid, Xaa, from a peptide or arylamide. Xaa is preferably Glu or Asp but may be other amino acids, including Leu, Met, His, Cys and Gln.. Its function is as follows. Probably plays an important role in intracellular peptide degradation. This Cronobacter sakazakii (strain ATCC BAA-894) (Enterobacter sakazakii) protein is Peptidase B.